The primary structure comprises 388 residues: UDP-N-acetylglucosamine--N-acetylmuramyl-(pentapeptide) pyrophosphoryl-undecaprenol N-acetylglucosamine transferase (388 aa).

Residues 15-17 (TGG), N125, R168, S196, and Q297 contribute to the UDP-N-acetyl-alpha-D-glucosamine site.

This sequence belongs to the glycosyltransferase 28 family. MurG subfamily.

Its subcellular location is the cell inner membrane. It catalyses the reaction di-trans,octa-cis-undecaprenyl diphospho-N-acetyl-alpha-D-muramoyl-L-alanyl-D-glutamyl-meso-2,6-diaminopimeloyl-D-alanyl-D-alanine + UDP-N-acetyl-alpha-D-glucosamine = di-trans,octa-cis-undecaprenyl diphospho-[N-acetyl-alpha-D-glucosaminyl-(1-&gt;4)]-N-acetyl-alpha-D-muramoyl-L-alanyl-D-glutamyl-meso-2,6-diaminopimeloyl-D-alanyl-D-alanine + UDP + H(+). It participates in cell wall biogenesis; peptidoglycan biosynthesis. Its function is as follows. Cell wall formation. Catalyzes the transfer of a GlcNAc subunit on undecaprenyl-pyrophosphoryl-MurNAc-pentapeptide (lipid intermediate I) to form undecaprenyl-pyrophosphoryl-MurNAc-(pentapeptide)GlcNAc (lipid intermediate II). In Novosphingobium aromaticivorans (strain ATCC 700278 / DSM 12444 / CCUG 56034 / CIP 105152 / NBRC 16084 / F199), this protein is UDP-N-acetylglucosamine--N-acetylmuramyl-(pentapeptide) pyrophosphoryl-undecaprenol N-acetylglucosamine transferase.